Reading from the N-terminus, the 245-residue chain is 2,3-bisphosphoglycerate-dependent phosphoglycerate mutase (245 aa).

Substrate-binding positions include 8–15 (RHGQSLWN), 21–22 (TG), Arg-60, 87–90 (ERHY), Lys-98, 114–115 (RR), and 183–184 (GN). The active-site Tele-phosphohistidine intermediate is His-9. Glu-87 acts as the Proton donor/acceptor in catalysis.

Belongs to the phosphoglycerate mutase family. BPG-dependent PGAM subfamily.

The enzyme catalyses (2R)-2-phosphoglycerate = (2R)-3-phosphoglycerate. The protein operates within carbohydrate degradation; glycolysis; pyruvate from D-glyceraldehyde 3-phosphate: step 3/5. Functionally, catalyzes the interconversion of 2-phosphoglycerate and 3-phosphoglycerate. In Bacillus cytotoxicus (strain DSM 22905 / CIP 110041 / 391-98 / NVH 391-98), this protein is 2,3-bisphosphoglycerate-dependent phosphoglycerate mutase.